The sequence spans 691 residues: NADH-ubiquinone oxidoreductase 75 kDa subunit (691 aa).

In terms of domain architecture, 2Fe-2S ferredoxin-type spans Met-1–Leu-78. [2Fe-2S] cluster-binding residues include Cys-34, Cys-45, Cys-48, and Cys-62. The region spanning Leu-78 to Gly-117 is the 4Fe-4S His(Cys)3-ligated-type domain. The [4Fe-4S] cluster site is built by His-94, Cys-98, Cys-101, Cys-107, Cys-146, Cys-149, Cys-152, and Cys-196. Positions Leu-215–Arg-271 constitute a 4Fe-4S Mo/W bis-MGD-type domain.

This sequence belongs to the complex I 75 kDa subunit family. In terms of assembly, complex I is composed of about 30 different subunits. [2Fe-2S] cluster is required as a cofactor. [4Fe-4S] cluster serves as cofactor.

The protein resides in the mitochondrion inner membrane. The enzyme catalyses a ubiquinone + NADH + 5 H(+)(in) = a ubiquinol + NAD(+) + 4 H(+)(out). Its function is as follows. Core subunit of the mitochondrial membrane respiratory chain NADH dehydrogenase (Complex I) that is believed to belong to the minimal assembly required for catalysis. Complex I functions in the transfer of electrons from NADH to the respiratory chain. The immediate electron acceptor for the enzyme is believed to be ubiquinone. This is the largest subunit of complex I and it is a component of the iron-sulfur (IP) fragment of the enzyme. It may form part of the active site crevice where NADH is oxidized. In Reclinomonas americana, this protein is NADH-ubiquinone oxidoreductase 75 kDa subunit (NAD11).